Consider the following 271-residue polypeptide: Tryptophan synthase alpha chain (271 aa).

Residues glutamate 49 and aspartate 60 each act as proton acceptor in the active site.

This sequence belongs to the TrpA family. Tetramer of two alpha and two beta chains.

The enzyme catalyses (1S,2R)-1-C-(indol-3-yl)glycerol 3-phosphate + L-serine = D-glyceraldehyde 3-phosphate + L-tryptophan + H2O. It functions in the pathway amino-acid biosynthesis; L-tryptophan biosynthesis; L-tryptophan from chorismate: step 5/5. Functionally, the alpha subunit is responsible for the aldol cleavage of indoleglycerol phosphate to indole and glyceraldehyde 3-phosphate. The chain is Tryptophan synthase alpha chain from Burkholderia lata (strain ATCC 17760 / DSM 23089 / LMG 22485 / NCIMB 9086 / R18194 / 383).